The primary structure comprises 517 residues: Carotenoid phi-ring synthase (517 aa).

The segment at 1 to 24 (MFARDSGRGHRHGRDRQAAVVPAP) is disordered. FAD-binding positions include Ala-45, 64 to 65 (ER), Arg-72, Tyr-99, Asp-461, and Met-472.

The protein belongs to the carotenoid/retinoid oxidoreductase family. The cofactor is FAD.

The enzyme catalyses a carotenoid beta-end derivative + 2 A = a carotenoid phi-end derivative + 2 AH2. The protein operates within carotenoid biosynthesis. Involved in the biosynthesis of isorenieratene, a carotenoid with aromatic end groups. Catalyzes the introduction of two additional double bonds into each ionone ring of beta-carotene to produce isorenieratene. The reaction includes an intramolecular methyl transfer from position C1 to position C2 of the ring. The sequence is that of Carotenoid phi-ring synthase from Streptomyces griseus.